The primary structure comprises 326 residues: Septum site-determining protein minD homolog, chloroplastic (326 aa).

A chloroplast-targeting transit peptide spans methionine 1 to valine 62. Residue lysine 67–threonine 74 coordinates ATP.

It belongs to the ParA family. MinD subfamily. Homodimer. Interacts with MINE1. Binds to ARC3. Interacts with MCD1. Interacts with CDP1/PARC6.

The protein resides in the plastid. The protein localises to the chloroplast inner membrane. Its activity is regulated as follows. Stimulated ATPase activity by MINE1. In terms of biological role, together with ARC3 and MCD1, regulates FtsZ ring positioning in chloroplasts in an ARC6-dependent manner. Calcium-dependent ATPase required for the correct placement of the plastid division site. Inhibits FtsZ filament and ring formation in the plastid. Mediates inhibition of plastid division. In cooperation with MINE1, prevents FtsZ ring formation anywhere outside of the mid-plastids. The sequence is that of Septum site-determining protein minD homolog, chloroplastic from Arabidopsis thaliana (Mouse-ear cress).